The primary structure comprises 116 residues: ACSTPHYDLPLICAATWTATCVPRQTSAARCGPCPRHDPHPSAPLPLPAPHAVDPASRERLLCFSPACFSHSLYLFLNNKNTETLIITAVCFIRVSRCRKKREGSPKYSVSLTRAY.

This is an uncharacterized protein from Homo sapiens (Human).